Here is a 391-residue protein sequence, read N- to C-terminus: Tryptophan synthase beta chain (391 aa).

Lysine 84 carries the post-translational modification N6-(pyridoxal phosphate)lysine.

The protein belongs to the TrpB family. Tetramer of two alpha and two beta chains. Pyridoxal 5'-phosphate is required as a cofactor.

The catalysed reaction is (1S,2R)-1-C-(indol-3-yl)glycerol 3-phosphate + L-serine = D-glyceraldehyde 3-phosphate + L-tryptophan + H2O. Its pathway is amino-acid biosynthesis; L-tryptophan biosynthesis; L-tryptophan from chorismate: step 5/5. Its function is as follows. The beta subunit is responsible for the synthesis of L-tryptophan from indole and L-serine. The protein is Tryptophan synthase beta chain of Thermoanaerobacter pseudethanolicus (strain ATCC 33223 / 39E) (Clostridium thermohydrosulfuricum).